An 804-amino-acid chain; its full sequence is ABC transporter aclQ (804 aa).

Transmembrane regions (helical) follow at residues 3–23 (LAVL…ISYL), 52–72 (FTAI…SITI), 97–117 (IAVF…PFSP), 119–139 (LSHS…LAMF), 155–175 (LQLG…ALYF), 206–226 (HGGW…LWPS), 239–259 (FVLL…LGIV), 349–369 (LVFQ…YFLI), and 373–393 (AFYS…TIYM). Residues 236–518 (IFCFVLLVIQ…FGSFYTQVQN (283 aa)) enclose the ABC transmembrane type-1 domain. Asn460 is a glycosylation site (N-linked (GlcNAc...) asparagine). 2 helical membrane passes run 464–484 (NLLF…QISA) and 489–509 (VAMF…LNFF). The ABC transporter domain occupies 552 to 786 (VEFTHVNFAY…NGMYSQMWAK (235 aa)). 585 to 592 (GESGSGKS) is a binding site for ATP. Residues Asn639 and Asn797 are each glycosylated (N-linked (GlcNAc...) asparagine).

This sequence belongs to the ABC transporter superfamily. ABCB family. Heavy Metal importer (TC 3.A.1.210) subfamily.

The protein localises to the membrane. Functionally, ABC transporter; part of the gene cluster that mediates the biosynthesis of aspirochlorine (or antibiotic A30641), an unusual halogenated spiro compound with distinctive antifungal properties due to selective inhibition of protein biosynthesis, and which is also active against bacteria, viruses, and murine tumor cells. The chain is ABC transporter aclQ from Aspergillus oryzae (strain ATCC 42149 / RIB 40) (Yellow koji mold).